The primary structure comprises 119 residues: Large ribosomal subunit protein uL18 (119 aa).

It belongs to the universal ribosomal protein uL18 family. Part of the 50S ribosomal subunit; part of the 5S rRNA/L5/L18/L25 subcomplex. Contacts the 5S and 23S rRNAs.

This is one of the proteins that bind and probably mediate the attachment of the 5S RNA into the large ribosomal subunit, where it forms part of the central protuberance. The sequence is that of Large ribosomal subunit protein uL18 from Anaeromyxobacter sp. (strain Fw109-5).